We begin with the raw amino-acid sequence, 155 residues long: MAVPGCNKDSVRAGCKKCGYPGHLTFECRNFLRVDPKRDIVLDVSSTSSEDSDEENEELNKLQALQEKRINEEEEKKKEKSKEKIKLKKKRKRSYSSSSTEEDTSKQKKQKYQKKEKKKEKKSKSKKGKHHKKEKKKRKKEKHSSTPNSSEFSRK.

The segment at 13 to 30 adopts a CCHC-type zinc-finger fold; that stretch reads AGCKKCGYPGHLTFECRN. The disordered stretch occupies residues 44-155; the sequence is VSSTSSEDSD…TPNSSEFSRK (112 aa). Ser-52 is subject to Phosphoserine. Basic and acidic residues predominate over residues 66–84; the sequence is QEKRINEEEEKKKEKSKEK. Residues 85–94 show a composition bias toward basic residues; the sequence is IKLKKKRKRS. 2 positions are modified to phosphoserine: Ser-96 and Ser-97. The span at 107-142 shows a compositional bias: basic residues; sequence QKKQKYQKKEKKKEKKSKSKKGKHHKKEKKKRKKEK. Thr-146 is subject to Phosphothreonine. Polar residues predominate over residues 146-155; it reads TPNSSEFSRK.

Interacts with SREK1/SFRS12.

Functionally, possible splicing regulator involved in the control of cellular survival. This is Protein SREK1IP1 (SREK1IP1) from Homo sapiens (Human).